A 396-amino-acid chain; its full sequence is Elongation factor Tu (396 aa).

The region spanning 10 to 206 (KPHCNIGTIG…AVDAYIPQPE (197 aa)) is the tr-type G domain. The tract at residues 19–26 (GHVDHGKT) is G1. 19–26 (GHVDHGKT) is a binding site for GTP. T26 contributes to the Mg(2+) binding site. Positions 60–64 (GITIS) are G2. Residues 81 to 84 (DCPG) form a G3 region. GTP is bound by residues 81–85 (DCPGH) and 136–139 (NKVD). The G4 stretch occupies residues 136 to 139 (NKVD). The segment at 174 to 176 (SAL) is G5.

The protein belongs to the TRAFAC class translation factor GTPase superfamily. Classic translation factor GTPase family. EF-Tu/EF-1A subfamily. As to quaternary structure, monomer.

It is found in the cytoplasm. It carries out the reaction GTP + H2O = GDP + phosphate + H(+). GTP hydrolase that promotes the GTP-dependent binding of aminoacyl-tRNA to the A-site of ribosomes during protein biosynthesis. The polypeptide is Elongation factor Tu (Granulibacter bethesdensis (strain ATCC BAA-1260 / CGDNIH1)).